We begin with the raw amino-acid sequence, 335 residues long: Aliphatic sulfonates import ATP-binding protein SsuB (335 aa).

A disordered region spans residues 29–61 (DGDAQDAAVYERDGGAHAPPFASGGAPPDGDRA). One can recognise an ABC transporter domain in the interval 74-293 (VRLTRVSKRY…ARASAAFAAL (220 aa)). Residue 106–113 (GRSGCGKS) coordinates ATP. Residues 308–335 (APAAPNAAGPEGASRGRAAPASGLRWAV) are disordered.

The protein belongs to the ABC transporter superfamily. Aliphatic sulfonates importer (TC 3.A.1.17.2) family. In terms of assembly, the complex is composed of two ATP-binding proteins (SsuB), two transmembrane proteins (SsuC) and a solute-binding protein (SsuA).

Its subcellular location is the cell inner membrane. It catalyses the reaction ATP + H2O + aliphatic sulfonate-[sulfonate-binding protein]Side 1 = ADP + phosphate + aliphatic sulfonateSide 2 + [sulfonate-binding protein]Side 1.. Functionally, part of the ABC transporter complex SsuABC involved in aliphatic sulfonates import. Responsible for energy coupling to the transport system. The chain is Aliphatic sulfonates import ATP-binding protein SsuB from Burkholderia pseudomallei (strain 1710b).